The sequence spans 263 residues: Probable ribosomal RNA small subunit methyltransferase A (263 aa).

Residues Leu12, Gly37, Glu58, Asp83, and Asn100 each contribute to the S-adenosyl-L-methionine site.

This sequence belongs to the class I-like SAM-binding methyltransferase superfamily. rRNA adenine N(6)-methyltransferase family. RsmA subfamily.

Its subcellular location is the cytoplasm. Its function is as follows. Specifically dimethylates two adjacent adenosines in the loop of a conserved hairpin near the 3'-end of 16S rRNA in the 30S particle. May play a critical role in biogenesis of 30S subunits. In Methanococcus maripaludis (strain C5 / ATCC BAA-1333), this protein is Probable ribosomal RNA small subunit methyltransferase A.